We begin with the raw amino-acid sequence, 203 residues long: Interferon type B (203 aa).

An N-terminal signal peptide occupies residues 1–27 (MTANHQSPGMHSILLLLLLPALTTTFS). 2 disulfides stabilise this stretch: Cys-28-Cys-125 and Cys-57-Cys-164. N-linked (GlcNAc...) asparagine glycosylation is found at Asn-37 and Asn-160.

It belongs to the alpha/beta interferon family.

It is found in the secreted. In terms of biological role, has antiviral activities. The polypeptide is Interferon type B (IFNB) (Gallus gallus (Chicken)).